Consider the following 120-residue polypeptide: MIMPQTRLVVADNTGAKEIMCFRILGKKRVAQVGDIIVASVKEAVPRSNIKKGDVVYAVVIRTKRTIKRKDGSCVRFDDNAAVIIDKEGNPKGTRVFGPVARELRDKNFMKIISLATEVI.

The protein belongs to the universal ribosomal protein uL14 family. In terms of assembly, part of the 50S ribosomal subunit. Forms a cluster with proteins L3 and L19. In the 70S ribosome, L14 and L19 interact and together make contacts with the 16S rRNA in bridges B5 and B8.

Its function is as follows. Binds to 23S rRNA. Forms part of two intersubunit bridges in the 70S ribosome. The polypeptide is Large ribosomal subunit protein uL14 (Dictyoglomus thermophilum (strain ATCC 35947 / DSM 3960 / H-6-12)).